The primary structure comprises 415 residues: rRNA methyltransferase 3, mitochondrial (415 aa).

A mitochondrion-targeting transit peptide spans 1-47; it reads MAALCRGTVRACILKPLGLSVSLQVKRNVRALRRTPVRVLPAAEKGR. The interval 41–73 is disordered; that stretch reads PAAEKGRERKEVEARRPQQPRQSEYQTRTSQGV. The span at 44–56 shows a compositional bias: basic and acidic residues; that stretch reads EKGRERKEVEARR. Residues 59 to 73 show a composition bias toward polar residues; that stretch reads QPRQSEYQTRTSQGV. The S-adenosyl-L-methionine site is built by G357, I381, and L390.

The protein belongs to the class IV-like SAM-binding methyltransferase superfamily. RNA methyltransferase TrmH family.

The protein resides in the mitochondrion. It carries out the reaction a uridine in rRNA + S-adenosyl-L-methionine = a 2'-O-methyluridine in rRNA + S-adenosyl-L-homocysteine + H(+). In terms of biological role, S-adenosyl-L-methionine-dependent 2'-O-ribose methyltransferase that catalyzes the formation of 2'-O-methylguanosine at position 1370 (Gm1370) in the mitochondrial large subunit ribosomal RNA (mtLSU rRNA), a conserved modification in the peptidyl transferase domain of the mtLSU rRNA. Also required for formation of 2'-O-methyluridine at position 1369 (Um1369) mediated by MRM2. This Xenopus tropicalis (Western clawed frog) protein is rRNA methyltransferase 3, mitochondrial.